The primary structure comprises 237 residues: Ribonuclease PH (237 aa).

Phosphate is bound by residues arginine 86 and 124-126 (GTR).

It belongs to the RNase PH family. In terms of assembly, homohexameric ring arranged as a trimer of dimers.

It catalyses the reaction tRNA(n+1) + phosphate = tRNA(n) + a ribonucleoside 5'-diphosphate. Functionally, phosphorolytic 3'-5' exoribonuclease that plays an important role in tRNA 3'-end maturation. Removes nucleotide residues following the 3'-CCA terminus of tRNAs; can also add nucleotides to the ends of RNA molecules by using nucleoside diphosphates as substrates, but this may not be physiologically important. Probably plays a role in initiation of 16S rRNA degradation (leading to ribosome degradation) during starvation. This chain is Ribonuclease PH, found in Nitrobacter hamburgensis (strain DSM 10229 / NCIMB 13809 / X14).